The chain runs to 369 residues: tRNA/tmRNA (uracil-C(5))-methyltransferase (369 aa).

S-adenosyl-L-methionine-binding residues include Gln190, Tyr218, Asn223, Glu239, and Asp301. The active-site Nucleophile is the Cys326. The active-site Proton acceptor is the Glu360.

It belongs to the class I-like SAM-binding methyltransferase superfamily. RNA M5U methyltransferase family. TrmA subfamily.

It catalyses the reaction uridine(54) in tRNA + S-adenosyl-L-methionine = 5-methyluridine(54) in tRNA + S-adenosyl-L-homocysteine + H(+). The catalysed reaction is uridine(341) in tmRNA + S-adenosyl-L-methionine = 5-methyluridine(341) in tmRNA + S-adenosyl-L-homocysteine + H(+). Its function is as follows. Dual-specificity methyltransferase that catalyzes the formation of 5-methyluridine at position 54 (m5U54) in all tRNAs, and that of position 341 (m5U341) in tmRNA (transfer-mRNA). The protein is tRNA/tmRNA (uracil-C(5))-methyltransferase of Vibrio atlanticus (strain LGP32) (Vibrio splendidus (strain Mel32)).